The sequence spans 207 residues: Large ribosomal subunit protein uL4 (207 aa).

The interval 53–76 (TVSEVSGTTKKPFKQKGTGNARQG) is disordered.

The protein belongs to the universal ribosomal protein uL4 family. Part of the 50S ribosomal subunit.

Functionally, one of the primary rRNA binding proteins, this protein initially binds near the 5'-end of the 23S rRNA. It is important during the early stages of 50S assembly. It makes multiple contacts with different domains of the 23S rRNA in the assembled 50S subunit and ribosome. Its function is as follows. Forms part of the polypeptide exit tunnel. The chain is Large ribosomal subunit protein uL4 from Rickettsia bellii (strain OSU 85-389).